The following is a 124-amino-acid chain: Small ribosomal subunit protein bS6 (124 aa).

Positions Pro99–Asp124 are disordered. Residues Ser109–Asp124 show a composition bias toward low complexity.

The protein belongs to the bacterial ribosomal protein bS6 family.

Binds together with bS18 to 16S ribosomal RNA. In Synechococcus sp. (strain CC9605), this protein is Small ribosomal subunit protein bS6.